An 891-amino-acid chain; its full sequence is Protein translocase subunit SecA (891 aa).

ATP-binding positions include Gln83, 101 to 105 (GEGKT), and Asp489.

This sequence belongs to the SecA family.

The protein localises to the plastid. It is found in the chloroplast stroma. The protein resides in the chloroplast thylakoid membrane. It catalyses the reaction ATP + H2O + cellular proteinSide 1 = ADP + phosphate + cellular proteinSide 2.. Its function is as follows. Has a central role in coupling the hydrolysis of ATP to the transfer of proteins across the thylakoid membrane. The polypeptide is Protein translocase subunit SecA (Diacronema lutheri (Unicellular marine alga)).